The primary structure comprises 456 residues: D-glycerate 3-kinase, chloroplastic (456 aa).

The N-terminal 63 residues, 1 to 63 (MAVAISGSSL…KFNDHVVNPS (63 aa)), are a transit peptide targeting the chloroplast. 215-222 (APQGCGKT) serves as a coordination point for ATP.

It belongs to the GLYK kinase family.

The protein resides in the plastid. It localises to the chloroplast. It is found in the cytoplasm. It carries out the reaction (R)-glycerate + ATP = (2R)-3-phosphoglycerate + ADP + H(+). Its pathway is photosynthesis; photorespiration; 3-phospho-D-glycerate from glycine: step 4/4. Its function is as follows. Catalyzes the concluding reaction of the photorespiratory C2 cycle, an indispensable ancillary metabolic pathway to the photosynthetic C3 cycle that enables land plants to grow in an oxygen-containing atmosphere. Cytoplasmic D-glycerate 3-kinase that constitutes a photorespiratory bypass that alleviates fluctuating light-induced photoinhibition. The chain is D-glycerate 3-kinase, chloroplastic from Arabidopsis thaliana (Mouse-ear cress).